A 737-amino-acid polypeptide reads, in one-letter code: tRNA (guanine(27)-N(2))-dimethyltransferase (737 aa).

The segment covering 1–10 (MENMAEEELL) has biased composition (acidic residues). Residues 1 to 65 (MENMAEEELL…ASAPVPAPAL (65 aa)) form a disordered region. Over residues 17-49 (VVQVPVPTPTPDSARVPAPAPDSAPVSASTPAP) the composition is skewed to low complexity. Position 24 is a phosphothreonine (Thr-24). The span at 50–62 (ASAPTPASAPVPA) shows a compositional bias: pro residues. Ser-72 carries the phosphoserine modification. Positions 141–145 (HKLHR) match the Nucleolar localization signal motif. A C2H2-type zinc finger spans residues 190-212 (YHCIICSATITRRTDMLGHVRRH). The Trm1 methyltransferase domain occupies 233–692 (EILKEADTDV…APLMQFKSIL (460 aa)). S-adenosyl-L-methionine contacts are provided by Arg-266, Asp-313, Asp-363, and Ala-364. Positions 494, 497, 519, and 521 each coordinate Zn(2+). Residue Lys-589 forms a Glycyl lysine isopeptide (Lys-Gly) (interchain with G-Cter in SUMO2) linkage. Position 616 is a phosphoserine (Ser-616).

This sequence belongs to the class I-like SAM-binding methyltransferase superfamily. Trm1 family.

Its subcellular location is the nucleus. The protein localises to the nucleolus. The enzyme catalyses guanosine(27) in tRNA(Tyr) + 2 S-adenosyl-L-methionine = N(2)-dimethylguanosine(27) in tRNA(Tyr) + 2 S-adenosyl-L-homocysteine + 2 H(+). Specifically dimethylates a single guanine residue at position 27 of tRNA(Tyr) using S-adenosyl-L-methionine as donor of the methyl groups. Dimethylation at position 27 of tRNA(Tyr) is required for efficient translation of tyrosine codons. Also required to maintain 3-(3-amino-3-carboxypropyl)uridine (acp3U) in the D-loop of several cytoplasmic tRNAs. The chain is tRNA (guanine(27)-N(2))-dimethyltransferase (TRMT1L) from Bos taurus (Bovine).